We begin with the raw amino-acid sequence, 168 residues long: Ribosome maturation factor RimM (168 aa).

The region spanning 95-168 (KEGDYYWTDL…IIVVEWDADF (74 aa)) is the PRC barrel domain.

Belongs to the RimM family. In terms of assembly, binds ribosomal protein uS19.

The protein resides in the cytoplasm. An accessory protein needed during the final step in the assembly of 30S ribosomal subunit, possibly for assembly of the head region. Essential for efficient processing of 16S rRNA. May be needed both before and after RbfA during the maturation of 16S rRNA. It has affinity for free ribosomal 30S subunits but not for 70S ribosomes. The chain is Ribosome maturation factor RimM from Coxiella burnetii (strain CbuK_Q154) (Coxiella burnetii (strain Q154)).